A 156-amino-acid chain; its full sequence is tRNA-specific adenosine deaminase (156 aa).

In terms of domain architecture, CMP/dCMP-type deaminase spans 2 to 120 (TNDIYFMTLA…GSLMNLLQQS (119 aa)). Histidine 53 contributes to the Zn(2+) binding site. Glutamate 55 functions as the Proton donor in the catalytic mechanism. Zn(2+) contacts are provided by cysteine 83 and cysteine 86.

The protein belongs to the cytidine and deoxycytidylate deaminase family. As to quaternary structure, homodimer. The cofactor is Zn(2+).

It catalyses the reaction adenosine(34) in tRNA + H2O + H(+) = inosine(34) in tRNA + NH4(+). In terms of biological role, catalyzes the deamination of adenosine to inosine at the wobble position 34 of tRNA(Arg2). The protein is tRNA-specific adenosine deaminase of Staphylococcus aureus (strain Mu50 / ATCC 700699).